Here is an 829-residue protein sequence, read N- to C-terminus: Periplasmic nitrate reductase (829 aa).

A signal peptide (tat-type signal) is located at residues 1–29 (MKMTRRAFVKANAAASAAAVAGVTLPASA). Residues 41-97 (IKWDKAPCRFCGTGCSVLVGTQNGRVVATQGDPEAPVNKGLNCIKGYFLSKIMYGKD) form the 4Fe-4S Mo/W bis-MGD-type domain. [4Fe-4S] cluster contacts are provided by cysteine 48, cysteine 51, cysteine 55, and cysteine 83. Mo-bis(molybdopterin guanine dinucleotide) contacts are provided by residues lysine 85, glutamine 152, asparagine 177, cysteine 181, 214–221 (WGSNMAEM), 245–249 (STYYH), 264–266 (QSD), methionine 374, glutamine 378, asparagine 484, 510–511 (SD), lysine 533, aspartate 560, and 718–727 (TGRVLEHWHT). Phenylalanine 794 contributes to the substrate binding site. Mo-bis(molybdopterin guanine dinucleotide)-binding residues include asparagine 802 and lysine 819.

The protein belongs to the prokaryotic molybdopterin-containing oxidoreductase family. NasA/NapA/NarB subfamily. As to quaternary structure, component of the periplasmic nitrate reductase NapAB complex composed of NapA and NapB. [4Fe-4S] cluster is required as a cofactor. The cofactor is Mo-bis(molybdopterin guanine dinucleotide). In terms of processing, predicted to be exported by the Tat system. The position of the signal peptide cleavage has not been experimentally proven.

The protein resides in the periplasm. The catalysed reaction is 2 Fe(II)-[cytochrome] + nitrate + 2 H(+) = 2 Fe(III)-[cytochrome] + nitrite + H2O. Functionally, catalytic subunit of the periplasmic nitrate reductase complex NapAB. Receives electrons from NapB and catalyzes the reduction of nitrate to nitrite. This Aliivibrio fischeri (strain ATCC 700601 / ES114) (Vibrio fischeri) protein is Periplasmic nitrate reductase.